Consider the following 301-residue polypeptide: Phosphatidylserine decarboxylase proenzyme (301 aa).

Catalysis depends on charge relay system; for autoendoproteolytic cleavage activity residues Asp115, His171, and Ser258. Ser258 acts as the Schiff-base intermediate with substrate; via pyruvic acid; for decarboxylase activity in catalysis. Residue Ser258 is modified to Pyruvic acid (Ser); by autocatalysis.

Belongs to the phosphatidylserine decarboxylase family. PSD-B subfamily. Prokaryotic type II sub-subfamily. As to quaternary structure, heterodimer of a large membrane-associated beta subunit and a small pyruvoyl-containing alpha subunit. It depends on pyruvate as a cofactor. In terms of processing, is synthesized initially as an inactive proenzyme. Formation of the active enzyme involves a self-maturation process in which the active site pyruvoyl group is generated from an internal serine residue via an autocatalytic post-translational modification. Two non-identical subunits are generated from the proenzyme in this reaction, and the pyruvate is formed at the N-terminus of the alpha chain, which is derived from the carboxyl end of the proenzyme. The autoendoproteolytic cleavage occurs by a canonical serine protease mechanism, in which the side chain hydroxyl group of the serine supplies its oxygen atom to form the C-terminus of the beta chain, while the remainder of the serine residue undergoes an oxidative deamination to produce ammonia and the pyruvoyl prosthetic group on the alpha chain. During this reaction, the Ser that is part of the protease active site of the proenzyme becomes the pyruvoyl prosthetic group, which constitutes an essential element of the active site of the mature decarboxylase.

The protein resides in the cell membrane. It carries out the reaction a 1,2-diacyl-sn-glycero-3-phospho-L-serine + H(+) = a 1,2-diacyl-sn-glycero-3-phosphoethanolamine + CO2. It functions in the pathway phospholipid metabolism; phosphatidylethanolamine biosynthesis; phosphatidylethanolamine from CDP-diacylglycerol: step 2/2. Catalyzes the formation of phosphatidylethanolamine (PtdEtn) from phosphatidylserine (PtdSer). In Chlamydia pneumoniae (Chlamydophila pneumoniae), this protein is Phosphatidylserine decarboxylase proenzyme.